The primary structure comprises 156 residues: Arginine repressor (156 aa).

This sequence belongs to the ArgR family.

It localises to the cytoplasm. Its pathway is amino-acid biosynthesis; L-arginine biosynthesis [regulation]. Functionally, regulates arginine biosynthesis genes. This Salmonella agona (strain SL483) protein is Arginine repressor.